A 299-amino-acid chain; its full sequence is ATP phosphoribosyltransferase (299 aa).

Belongs to the ATP phosphoribosyltransferase family. Long subfamily. The cofactor is Mg(2+).

The protein resides in the cytoplasm. The enzyme catalyses 1-(5-phospho-beta-D-ribosyl)-ATP + diphosphate = 5-phospho-alpha-D-ribose 1-diphosphate + ATP. Its pathway is amino-acid biosynthesis; L-histidine biosynthesis; L-histidine from 5-phospho-alpha-D-ribose 1-diphosphate: step 1/9. With respect to regulation, feedback inhibited by histidine. Functionally, catalyzes the condensation of ATP and 5-phosphoribose 1-diphosphate to form N'-(5'-phosphoribosyl)-ATP (PR-ATP). Has a crucial role in the pathway because the rate of histidine biosynthesis seems to be controlled primarily by regulation of HisG enzymatic activity. In Shewanella piezotolerans (strain WP3 / JCM 13877), this protein is ATP phosphoribosyltransferase.